A 462-amino-acid chain; its full sequence is Cysteine--tRNA ligase (462 aa).

Cys-27 serves as a coordination point for Zn(2+). A 'HIGH' region motif is present at residues 29-39 (PTVYNYIHVGN). Cys-209, His-234, and Glu-238 together coordinate Zn(2+). Residues 266–270 (KMSKS) carry the 'KMSKS' region motif. Lys-269 contacts ATP.

Belongs to the class-I aminoacyl-tRNA synthetase family. Monomer. It depends on Zn(2+) as a cofactor.

Its subcellular location is the cytoplasm. It carries out the reaction tRNA(Cys) + L-cysteine + ATP = L-cysteinyl-tRNA(Cys) + AMP + diphosphate. This is Cysteine--tRNA ligase from Finegoldia magna (strain ATCC 29328 / DSM 20472 / WAL 2508) (Peptostreptococcus magnus).